The sequence spans 306 residues: Ribosomal RNA small subunit methyltransferase H (306 aa).

Residues 37 to 39, Asp-56, Asp-102, and Gln-109 contribute to the S-adenosyl-L-methionine site; that span reads GGH.

This sequence belongs to the methyltransferase superfamily. RsmH family.

The protein resides in the cytoplasm. The enzyme catalyses cytidine(1402) in 16S rRNA + S-adenosyl-L-methionine = N(4)-methylcytidine(1402) in 16S rRNA + S-adenosyl-L-homocysteine + H(+). Functionally, specifically methylates the N4 position of cytidine in position 1402 (C1402) of 16S rRNA. The protein is Ribosomal RNA small subunit methyltransferase H of Nautilia profundicola (strain ATCC BAA-1463 / DSM 18972 / AmH).